The following is a 233-amino-acid chain: Protein Thf1 (233 aa).

The stretch at Asp-183–Ala-204 forms a coiled coil. Residues Ala-212–Glu-233 are disordered.

Belongs to the THF1 family.

Its function is as follows. May be involved in photosynthetic membrane biogenesis. The sequence is that of Protein Thf1 from Nostoc sp. (strain PCC 7120 / SAG 25.82 / UTEX 2576).